A 364-amino-acid polypeptide reads, in one-letter code: Probable cysteine protease RDL4 (364 aa).

A signal peptide spans 1–23; it reads MGSAKSAMLILLVAMVIASCATA. Positions 24 to 136 are cleaved as a propeptide — activation peptide; that stretch reads IDMSVVSYDD…DRYKTSADDV (113 aa). A glycan (N-linked (GlcNAc...) asparagine) is linked at asparagine 87. 3 disulfides stabilise this stretch: cysteine 158/cysteine 199, cysteine 192/cysteine 232, and cysteine 291/cysteine 342. Cysteine 161 is an active-site residue. Catalysis depends on residues histidine 297 and asparagine 317.

Belongs to the peptidase C1 family. As to expression, expressed in inflorescences.

Functionally, probable thiol protease. This Arabidopsis thaliana (Mouse-ear cress) protein is Probable cysteine protease RDL4.